A 134-amino-acid chain; its full sequence is Transmembrane protein 100 (134 aa).

S15 bears the Phosphoserine mark. A run of 2 helical transmembrane segments spans residues 56 to 76 and 84 to 104; these read CVIP…AVAY and IISI…ASSA. The residue at position 121 (S121) is a Phosphoserine.

As to quaternary structure, interacts (via C-terminus) with TRPA1 and TRPV1. Interacts with TASOR.

It localises to the cell membrane. Its subcellular location is the membrane. It is found in the perikaryon. The protein localises to the cytoplasm. The protein resides in the perinuclear region. It localises to the endoplasmic reticulum. Functionally, plays a role during embryonic arterial endothelium differentiation and vascular morphogenesis through the ACVRL1 receptor-dependent signaling pathway upon stimulation by bone morphogenetic proteins, such as GDF2/BMP9 and BMP10. Involved in the regulation of nociception, acting as a modulator of the interaction between TRPA1 and TRPV1, two molecular sensors and mediators of pain signals in dorsal root ganglia (DRG) neurons. Mechanistically, it weakens their interaction, thereby releasing the inhibition of TRPA1 by TRPV1 and increasing the single-channel open probability of the TRPA1-TRPV1 complex. This is Transmembrane protein 100 (TMEM100) from Bos taurus (Bovine).